A 30-amino-acid chain; its full sequence is Trypsin inhibitor 2 (30 aa).

3 disulfides stabilise this stretch: Cys2/Cys19, Cys9/Cys21, and Cys15/Cys27.

This sequence belongs to the protease inhibitor I7 (squash-type serine protease inhibitor) family.

The protein localises to the secreted. In terms of biological role, inhibits trypsin. This chain is Trypsin inhibitor 2, found in Ecballium elaterium (Squirting cucumber).